Reading from the N-terminus, the 71-residue chain is Small ribosomal subunit protein bS21 (71 aa).

It belongs to the bacterial ribosomal protein bS21 family.

The polypeptide is Small ribosomal subunit protein bS21 (Shewanella woodyi (strain ATCC 51908 / MS32)).